The following is a 35-amino-acid chain: Pheromone-binding protein 1 (35 aa).

The protein belongs to the PBP/GOBP family. As to quaternary structure, homodimer. As to expression, antenna.

Its function is as follows. This major soluble protein in olfactory sensilla of male moths might serve to solubilize the extremely hydrophobic pheromone molecules and to transport pheromone through the aqueous lymph to receptors located on olfactory cilia. The polypeptide is Pheromone-binding protein 1 (Lymantria dispar (Gypsy moth)).